The chain runs to 578 residues: Proteasome-associated ATPase (578 aa).

Positions 35–84 (RHLTALEEQLGAARTRLAQVSAQNDRLATTLREARDQIVALKAEVDRLGQ) form a coiled coil. Residue 266-271 (GCGKTL) participates in ATP binding. The tract at residues 577 to 578 (YL) is docks into pockets in the proteasome alpha-ring.

Belongs to the AAA ATPase family. As to quaternary structure, homohexamer. Assembles into a hexameric ring structure that caps the 20S proteasome core. Strongly interacts with the prokaryotic ubiquitin-like protein Pup through a hydrophobic interface; the interacting region of ARC lies in its N-terminal coiled-coil domain. There is one Pup binding site per ARC hexamer ring. Upon ATP-binding, the C-terminus of ARC interacts with the alpha-rings of the proteasome core, possibly by binding to the intersubunit pockets.

Its pathway is protein degradation; proteasomal Pup-dependent pathway. Functionally, ATPase which is responsible for recognizing, binding, unfolding and translocation of pupylated proteins into the bacterial 20S proteasome core particle. May be essential for opening the gate of the 20S proteasome via an interaction with its C-terminus, thereby allowing substrate entry and access to the site of proteolysis. Thus, the C-termini of the proteasomal ATPase may function like a 'key in a lock' to induce gate opening and therefore regulate proteolysis. The sequence is that of Proteasome-associated ATPase from Kineococcus radiotolerans (strain ATCC BAA-149 / DSM 14245 / SRS30216).